The chain runs to 581 residues: Sodium/hydrogen exchanger 8 (581 aa).

A run of 11 helical transmembrane segments spans residues 60 to 80 (MTIFFSLLVLAICIILVHLLI), 84 to 104 (LHFLPESVAVVSLGILMGAVI), 123 to 143 (PNMFFLLLLPPIIFESGYSLH), 156 to 176 (LFAVFGTAISAFVVGGGIYFL), 191 to 211 (FAFGSLISAVDPVATIAIFNA), 264 to 284 (FLKMFFGSAALGTLTGLISAL), 311 to 331 (GLAEGISLSGIMAILFSGIVM), 354 to 374 (VAFLCETCVFAFLGLSIFSFP), 379 to 399 (ISFVIWCIVLVLFGRAVNIFP), 417 to 437 (MFIMWFSGLRGAIPYALSLHL), and 451 to 471 (TTIVIVLFTILLLGGSTMPLI). Position 510 is a phosphothreonine (threonine 510). Phosphoserine occurs at positions 571 and 573.

This sequence belongs to the monovalent cation:proton antiporter 1 (CPA1) transporter (TC 2.A.36) family. As to expression, ubiquitous. Strongly expressed in skeletal muscle and kidney. Detected throughout the entire gastrointestinal tract, with high expression detected in stomach, duodenum and ascending colon.

The protein resides in the golgi apparatus membrane. It is found in the golgi apparatus. Its subcellular location is the trans-Golgi network membrane. The protein localises to the endosome. It localises to the multivesicular body membrane. The protein resides in the apical cell membrane. It is found in the cytoplasmic vesicle. Its subcellular location is the secretory vesicle. The protein localises to the acrosome. It catalyses the reaction Na(+)(in) + H(+)(out) = Na(+)(out) + H(+)(in). HOE642 inhibits SLC9A8 activity. Na(+)/H(+) antiporter. Mediates the electoneutral exchange of intracellular H(+) ions for extracellular Na(+) in 1:1 stoichiometry. Acts as an Na(+)/H(+) exchanger in the trans-Golgi. Contributes to the regulation of pH regulation of Golgi apparatus, and consequently, in protein trafficking and endosomal morphology. In germ cells, plays a crucial role in acrosome biogenesis and sperm development, probably by playing a role in the fusion of the Golgi-derived vesicles that form the acrosomal cap. Can also be active at the cell surface of specialized cells. In the small intestine, at the cell membrane, plays a major physiological role in transepithelial absorption of Na(+) and regulates intracellular pH homeostasis of intestinal epithelial cells. Acts as an important regulator of mucosal integrity in the intestine and in the stomach, could mediate the pH fluctuation necessary for mucin exocytosis or assist membrane trafficking of other proteins. Plays a role in photoreceptor survival and in the maintenance of intracellular pH homeostasis in retinal pigment epithelium (RPE cells). The sequence is that of Sodium/hydrogen exchanger 8 from Homo sapiens (Human).